The following is a 284-amino-acid chain: 4-hydroxy-3-methylbut-2-enyl diphosphate reductase (284 aa).

Cys-12 provides a ligand contact to [4Fe-4S] cluster. 2 residues coordinate (2E)-4-hydroxy-3-methylbut-2-enyl diphosphate: His-40 and His-76. 2 residues coordinate dimethylallyl diphosphate: His-40 and His-76. Positions 40 and 76 each coordinate isopentenyl diphosphate. Cys-98 provides a ligand contact to [4Fe-4S] cluster. His-126 contributes to the (2E)-4-hydroxy-3-methylbut-2-enyl diphosphate binding site. Dimethylallyl diphosphate is bound at residue His-126. An isopentenyl diphosphate-binding site is contributed by His-126. The Proton donor role is filled by Glu-128. Residue Thr-161 participates in (2E)-4-hydroxy-3-methylbut-2-enyl diphosphate binding. Cys-191 lines the [4Fe-4S] cluster pocket. The (2E)-4-hydroxy-3-methylbut-2-enyl diphosphate site is built by Ser-219, Ser-220, Asn-221, and Ser-263. Dimethylallyl diphosphate-binding residues include Ser-219, Ser-220, Asn-221, and Ser-263. Positions 219, 220, 221, and 263 each coordinate isopentenyl diphosphate.

Belongs to the IspH family. The cofactor is [4Fe-4S] cluster.

It catalyses the reaction isopentenyl diphosphate + 2 oxidized [2Fe-2S]-[ferredoxin] + H2O = (2E)-4-hydroxy-3-methylbut-2-enyl diphosphate + 2 reduced [2Fe-2S]-[ferredoxin] + 2 H(+). The enzyme catalyses dimethylallyl diphosphate + 2 oxidized [2Fe-2S]-[ferredoxin] + H2O = (2E)-4-hydroxy-3-methylbut-2-enyl diphosphate + 2 reduced [2Fe-2S]-[ferredoxin] + 2 H(+). It functions in the pathway isoprenoid biosynthesis; dimethylallyl diphosphate biosynthesis; dimethylallyl diphosphate from (2E)-4-hydroxy-3-methylbutenyl diphosphate: step 1/1. Its pathway is isoprenoid biosynthesis; isopentenyl diphosphate biosynthesis via DXP pathway; isopentenyl diphosphate from 1-deoxy-D-xylulose 5-phosphate: step 6/6. Catalyzes the conversion of 1-hydroxy-2-methyl-2-(E)-butenyl 4-diphosphate (HMBPP) into a mixture of isopentenyl diphosphate (IPP) and dimethylallyl diphosphate (DMAPP). Acts in the terminal step of the DOXP/MEP pathway for isoprenoid precursor biosynthesis. The polypeptide is 4-hydroxy-3-methylbut-2-enyl diphosphate reductase (Petrotoga mobilis (strain DSM 10674 / SJ95)).